The following is a 598-amino-acid chain: Aspartate--tRNA(Asp/Asn) ligase (598 aa).

Glutamate 174 serves as a coordination point for L-aspartate. The segment at 198-201 is aspartate; the sequence is QQLK. Position 220 (arginine 220) interacts with L-aspartate. Residues 220–222 and glutamine 229 contribute to the ATP site; that span reads RDE. Position 458 (histidine 458) interacts with L-aspartate. Glutamate 492 provides a ligand contact to ATP. L-aspartate is bound at residue arginine 499. 544-547 contacts ATP; the sequence is GIDR.

It belongs to the class-II aminoacyl-tRNA synthetase family. Type 1 subfamily. As to quaternary structure, homodimer.

It localises to the cytoplasm. The catalysed reaction is tRNA(Asx) + L-aspartate + ATP = L-aspartyl-tRNA(Asx) + AMP + diphosphate. Its function is as follows. Aspartyl-tRNA synthetase with relaxed tRNA specificity since it is able to aspartylate not only its cognate tRNA(Asp) but also tRNA(Asn). Reaction proceeds in two steps: L-aspartate is first activated by ATP to form Asp-AMP and then transferred to the acceptor end of tRNA(Asp/Asn). In Dehalococcoides mccartyi (strain ATCC BAA-2100 / JCM 16839 / KCTC 5957 / BAV1), this protein is Aspartate--tRNA(Asp/Asn) ligase.